We begin with the raw amino-acid sequence, 686 residues long: Protein MxiA (686 aa).

The next 6 helical transmembrane spans lie at 28 to 52, 105 to 129, 197 to 216, 232 to 256, 274 to 292, and 299 to 315; these read LIIPLPTYLVDFLIGLNIVLAILVF, FVIGDSLAVGFVIFSIVTVVQFIVI, AIAGIIIIFVNLIGGISVGM, ILTIGDGLVSQIPALLISISAGFIV, IFGNPFVLIVTSALALAIG, and FFVFFLIAVTLTALFYY.

Belongs to the FHIPEP (flagella/HR/invasion proteins export pore) family.

Its subcellular location is the cell inner membrane. Functionally, necessary for the secretion of IPA invasins. In Shigella flexneri, this protein is Protein MxiA (mxiA).